The primary structure comprises 230 residues: Protein-L-isoaspartate O-methyltransferase 1 (230 aa).

Ser-65 is an active-site residue.

This sequence belongs to the methyltransferase superfamily. L-isoaspartyl/D-aspartyl protein methyltransferase family. In terms of assembly, monomer. In terms of tissue distribution, expressed in roots, rosette leaves, stems, cauline leaves, flowers and developing seeds.

Its subcellular location is the cytoplasm. It carries out the reaction [protein]-L-isoaspartate + S-adenosyl-L-methionine = [protein]-L-isoaspartate alpha-methyl ester + S-adenosyl-L-homocysteine. Functionally, catalyzes the methyl esterification of L-isoaspartyl residues in peptides and proteins that result from spontaneous decomposition of normal L-aspartyl and L-asparaginyl residues. It plays a role in the repair and/or degradation of damaged proteins. Contributes to seed longevity and germination vigor by limiting the abnormal accumulation of the L-isoaspartyl residues in seed proteins. The sequence is that of Protein-L-isoaspartate O-methyltransferase 1 (PIMT1) from Arabidopsis thaliana (Mouse-ear cress).